Here is a 194-residue protein sequence, read N- to C-terminus: dTTP/UTP pyrophosphatase (194 aa).

The active-site Proton acceptor is the Asp69.

It belongs to the Maf family. YhdE subfamily. A divalent metal cation is required as a cofactor.

The protein resides in the cytoplasm. It catalyses the reaction dTTP + H2O = dTMP + diphosphate + H(+). The enzyme catalyses UTP + H2O = UMP + diphosphate + H(+). Functionally, nucleoside triphosphate pyrophosphatase that hydrolyzes dTTP and UTP. May have a dual role in cell division arrest and in preventing the incorporation of modified nucleotides into cellular nucleic acids. This chain is dTTP/UTP pyrophosphatase, found in Symbiobacterium thermophilum (strain DSM 24528 / JCM 14929 / IAM 14863 / T).